The following is a 525-amino-acid chain: DNA polymerase epsilon subunit 2 (525 aa).

This sequence belongs to the DNA polymerase epsilon subunit B family. As to quaternary structure, component of the epsilon DNA polymerase complex consisting of four subunits: the catalytic subunit PolE1/DNApol-epsilon255 and the accessory subunits PolE2/DNApol-epsilon58, Chrac-14/DNApolE3 and PolE4.

It localises to the nucleus. Functionally, accessory component of the DNA polymerase epsilon complex. Participates in DNA repair and in chromosomal DNA replication. Has a role in the entrance and progression through S phase. Has a role in endoreplication. Essential for viability and tissue development. The polypeptide is DNA polymerase epsilon subunit 2 (Drosophila melanogaster (Fruit fly)).